The chain runs to 460 residues: Orexin receptor type 2 (460 aa).

Over 1 to 54 (MSSTKLEDSLPRRNWSSASELNETQEPFLNPTDYDDEEFLRYLWREYLHPKEYE) the chain is Extracellular. N-linked (GlcNAc...) asparagine glycosylation is found at Asn14 and Asn22. The tract at residues 33-49 (DYDDEEFLRYLWREYLH) is required for response to orexin-A. Residues 55–75 (WVLIAGYIIVFVVALIGNVLV) traverse the membrane as a helical segment. Residues 76 to 88 (CVAVWKNHHMRTV) lie on the Cytoplasmic side of the membrane. Residues 89–110 (TNYFIVNLSLADVLVTITCLPA) traverse the membrane as a helical segment. Over 111–127 (TLVVDITETWFFGQSLC) the chain is Extracellular. Cys127 and Cys210 form a disulfide bridge. The helical transmembrane segment at 128–150 (KVIPYLQTVSVSVSVLTLSCIAL) threads the bilayer. The Cytoplasmic segment spans residues 151-170 (DRWYAICHPLMFKSTAKRAR). The chain crosses the membrane as a helical span at residues 171–191 (NSIVVIWIVSCIIMIPQAIVM). Residues 192–222 (ERSSMLPGLANKTTLFTVCDERWGGEVYPKM) are Extracellular-facing. Asn202 is a glycosylation site (N-linked (GlcNAc...) asparagine). The helical transmembrane segment at 223 to 243 (YHICFFLVTYMAPLCLMVLAY) threads the bilayer. Residues 244–304 (LQIFRKLWCR…QIRARRKTAR (61 aa)) are Cytoplasmic-facing. A helical membrane pass occupies residues 305-326 (MLMVVLLVFAICYLPISILNVL). Topologically, residues 327–342 (KRVFGMFTHTEDRETV) are extracellular. The chain crosses the membrane as a helical span at residues 343–366 (YAWFTFSHWLVYANSAANPIIYNF). Residues 367–460 (LSGKFREEFK…SSLLSTWLEV (94 aa)) are Cytoplasmic-facing.

Belongs to the G-protein coupled receptor 1 family. In terms of tissue distribution, expressed in the brain in the cerebral cortex, septal nuclei, hippocampus, medial thalamic groups, dorsal and median raphe nuclei, and many hypothalamic nuclei including the tuberomammillary nucleus, dorsomedial hypothalamus, paraventricular hypothalamic nucleus, and ventral premammillary nucleus. Not detected in the spleen, lung, liver, skeletal muscle, kidney and testis. Orexin receptor mRNA expression has also been reported in the adrenal gland, enteric nervous system, and pancreas.

Its subcellular location is the cell membrane. In terms of biological role, nonselective, high-affinity receptor for both orexin-A and orexin-B neuropeptides. Triggers an increase in cytoplasmic Ca(2+) levels in response to orexin-A binding. This chain is Orexin receptor type 2 (Hcrtr2), found in Rattus norvegicus (Rat).